The following is a 206-amino-acid chain: Large ribosomal subunit protein bL25 (206 aa).

The tract at residues 184–206 (AEEAAAEVAEPEVIKKGKEEEEE) is disordered. Over residues 195–206 (EVIKKGKEEEEE) the composition is skewed to basic and acidic residues.

The protein belongs to the bacterial ribosomal protein bL25 family. CTC subfamily. In terms of assembly, part of the 50S ribosomal subunit; part of the 5S rRNA/L5/L18/L25 subcomplex. Contacts the 5S rRNA. Binds to the 5S rRNA independently of L5 and L18.

Its function is as follows. This is one of the proteins that binds to the 5S RNA in the ribosome where it forms part of the central protuberance. This chain is Large ribosomal subunit protein bL25, found in Thermus thermophilus (strain ATCC BAA-163 / DSM 7039 / HB27).